A 183-amino-acid chain; its full sequence is ATP synthase subunit b, chloroplastic (183 aa).

The helical transmembrane segment at 20-42 (INTNVFETNIINLAIVVGTLFYY) threads the bilayer.

This sequence belongs to the ATPase B chain family. As to quaternary structure, F-type ATPases have 2 components, F(1) - the catalytic core - and F(0) - the membrane proton channel. F(1) has five subunits: alpha(3), beta(3), gamma(1), delta(1), epsilon(1). F(0) has four main subunits: a(1), b(1), b'(1) and c(10-14). The alpha and beta chains form an alternating ring which encloses part of the gamma chain. F(1) is attached to F(0) by a central stalk formed by the gamma and epsilon chains, while a peripheral stalk is formed by the delta, b and b' chains.

It is found in the plastid. It localises to the chloroplast thylakoid membrane. In terms of biological role, f(1)F(0) ATP synthase produces ATP from ADP in the presence of a proton or sodium gradient. F-type ATPases consist of two structural domains, F(1) containing the extramembraneous catalytic core and F(0) containing the membrane proton channel, linked together by a central stalk and a peripheral stalk. During catalysis, ATP synthesis in the catalytic domain of F(1) is coupled via a rotary mechanism of the central stalk subunits to proton translocation. Component of the F(0) channel, it forms part of the peripheral stalk, linking F(1) to F(0). The protein is ATP synthase subunit b, chloroplastic of Euglena gracilis.